Here is a 329-residue protein sequence, read N- to C-terminus: Ferredoxin--NAD(P)(+) reductase CarAd (329 aa).

The 2Fe-2S ferredoxin-type domain maps to 2 to 92; it reads YQLKIEGQAP…DLRIKVAVQD (91 aa). 4 residues coordinate [2Fe-2S] cluster: Cys35, Cys40, Cys43, and Cys76. An FAD-binding FR-type domain is found at 100 to 200; it reads ISRMEAEVVE…TGPMGTSFFR (101 aa).

Monomer. Carbazole 1,9a-dioxygenase complex consists of a terminal oxygenase component CarAa, a ferredoxin reductase component CarAd and a ferredoxin component CarAc. [2Fe-2S] cluster serves as cofactor. The cofactor is FAD.

The enzyme catalyses 2 reduced [2Fe-2S]-[ferredoxin] + NAD(+) + H(+) = 2 oxidized [2Fe-2S]-[ferredoxin] + NADH. It carries out the reaction 2 reduced [2Fe-2S]-[ferredoxin] + NADP(+) + H(+) = 2 oxidized [2Fe-2S]-[ferredoxin] + NADPH. Part of the multicomponent carbazole 1,9a-dioxygenase (CARDO), that converts carbazole (CAR) into 2-aminobiphenyl-2,3-diol. It can use both NAD and NADP as electron donors, but NAD is supposed to be the physiological electron donor. The sequence is that of Ferredoxin--NAD(P)(+) reductase CarAd (carAd) from Metapseudomonas resinovorans (Pseudomonas resinovorans).